Here is a 185-residue protein sequence, read N- to C-terminus: GTP-dependent dephospho-CoA kinase (185 aa).

GTP is bound by residues D50, V52, D73, K75, and E128.

The protein belongs to the GTP-dependent DPCK family.

The catalysed reaction is 3'-dephospho-CoA + GTP = GDP + CoA + H(+). It functions in the pathway cofactor biosynthesis; coenzyme A biosynthesis. Catalyzes the GTP-dependent phosphorylation of the 3'-hydroxyl group of dephosphocoenzyme A to form coenzyme A (CoA). This Aeropyrum pernix (strain ATCC 700893 / DSM 11879 / JCM 9820 / NBRC 100138 / K1) protein is GTP-dependent dephospho-CoA kinase.